Here is an 890-residue protein sequence, read N- to C-terminus: Alanine--tRNA ligase (890 aa).

Zn(2+)-binding residues include H567, H571, C680, and H684.

The protein belongs to the class-II aminoacyl-tRNA synthetase family. It depends on Zn(2+) as a cofactor.

Its subcellular location is the cytoplasm. It carries out the reaction tRNA(Ala) + L-alanine + ATP = L-alanyl-tRNA(Ala) + AMP + diphosphate. Its function is as follows. Catalyzes the attachment of alanine to tRNA(Ala) in a two-step reaction: alanine is first activated by ATP to form Ala-AMP and then transferred to the acceptor end of tRNA(Ala). Also edits incorrectly charged Ser-tRNA(Ala) and Gly-tRNA(Ala) via its editing domain. In Ruegeria pomeroyi (strain ATCC 700808 / DSM 15171 / DSS-3) (Silicibacter pomeroyi), this protein is Alanine--tRNA ligase.